The primary structure comprises 361 residues: [LysW]-lysine hydrolase (361 aa).

Histidine 67 contacts Zn(2+). Residue aspartate 69 is part of the active site. Aspartate 91 contributes to the Zn(2+) binding site. Catalysis depends on glutamate 124, which acts as the Proton acceptor. The Zn(2+) site is built by glutamate 125, glutamate 148, and histidine 326.

This sequence belongs to the peptidase M20A family. LysK subfamily. As to quaternary structure, homotetramer and homooctamer. Zn(2+) is required as a cofactor. Co(2+) serves as cofactor.

It localises to the cytoplasm. The catalysed reaction is [amino-group carrier protein]-C-terminal-gamma-(L-lysyl)-L-glutamate + H2O = [amino-group carrier protein]-C-terminal-L-glutamate + L-lysine. It participates in amino-acid biosynthesis; L-lysine biosynthesis via AAA pathway; L-lysine from L-alpha-aminoadipate (Thermus route): step 5/5. Functionally, catalyzes the release of L-lysine from [LysW]-gamma-L-lysine. In vitro, can deacetylate both N(2)-acetyl-L-lysine and N(2)-acetyl-L-ornithine. The protein is [LysW]-lysine hydrolase of Thermus thermophilus (strain ATCC BAA-163 / DSM 7039 / HB27).